Reading from the N-terminus, the 222-residue chain is DNA ADP-ribosyl transferase (222 aa).

The DarT domain maps to 12–209; sequence TLIYHITHLN…PVRVRRSWYY (198 aa). NAD(+) contacts are provided by residues 16–18, G25, and L33; that span reads HIT. The interval 38–56 is NAD(+)-binding element; it reads RPPTQQNVAYGHIQAHRAQ. A DNA-binding region spans residues 47–53; it reads YGHIQAH. An NAD(+)-binding site is contributed by R54. The active-site Proton acceptor is R54. 3 consecutive DNA-binding regions follow at residues 78 to 83, 148 to 151, and 154 to 158; these read RSPMLY, SYWA, and REKKQ. The ADP-ribosylating turn-turn loop stretch occupies residues 119 to 160; the sequence is TDRHAAVQYVCFFHKLEHLKALDWQAIQASYWANVREKKQAE. E160 is a catalytic residue.

Belongs to the DarT ADP-ribosyltransferase family. In terms of assembly, interacts with cognate antitoxin DarG (via C-terminus); this heterodimeric complex neutralizes the toxic effect of DarT by preventing ssDNA binding to DarT and consequently inactivating the toxin by direct protein-protein interactions.

The enzyme catalyses a thymidine in DNA + NAD(+) = an N-(ADP-alpha-D-ribosyl)-thymidine in DNA + nicotinamide + H(+). Its function is as follows. Toxic component of the hybrid type II/IV toxin-antitoxin (TA) system DarTG, which plays a crucial role in controlling bacterial growth and bacteriophage infection. Its toxic effect is neutralized by cognate antitoxin DarG. In case of phage infection, DarT toxin ADP-ribosylates DNA, which inhibits both viral DNA and RNA synthesis and leads to abortive infection. ADP-ribosylates ssDNA on the second thymidine of the consensus sequence 5'-TNTC-3'; the protein does not auto-modify. Has no activity on dsDNA in vitro. This leads to a decrease in DNA replication. Upon expression in E.coli inhibits cell growth, colony formation and induces the SOS response. Expression leads to bacteriostasis; however if cells grow over an hour in the presence of toxin, growth is no longer restored on antitoxin-inducing plates. In E.coli ADP-ribosylates genomic DNA (gDNA), which induces RecA expression (a marker for DNA damage). The protein is DNA ADP-ribosyl transferase of Thermus aquaticus (strain ATCC BAA-2747 / Y51MC23).